The primary structure comprises 784 residues: Toll-like receptor 2 (784 aa).

An N-terminal signal peptide occupies residues 1-20; that stretch reads MPRALWTAWVWAVIILSTEG. The Extracellular portion of the chain corresponds to 21–587; sequence ASDQASSLSC…ARLSLSECHR (567 aa). Residues C30 and C36 are joined by a disulfide bond. LRR repeat units follow at residues 54–77, 78–101, 102–125, 126–150, 151–175, 176–199, 200–223, 224–250, 251–278, 279–308, 309–337, 338–361, 362–388, 389–414, 415–437, 438–457, 458–478, 479–500, and 501–524; these read VKSLDLSNNDITYVGNRDLQRCVN, LKTLRLGANEIHTVEEDSFFHLRN, LEYLDLSYNRLSNLSSSWFRSLYV, LKFLNLLGNLYKTLGETSLFSHLPN, LRTLKVGNSNSFTEIHEKDFTGLTF, LEELEISAQNLQIYVPKSLKSIQN, ISHLILHLKQPILLVDILVDIVSS, LDCFELRDTNLHTFHFSEASISEMSTS, VKKLIFRNVQFTDESFVEVVKLFNYVSG, ILEVEFDDCTHDGIGDFRALSLDRIRHLGN, VETLTIRKLHIPQFFLFHDLSSIYPLTGR, VKRVTIENSKVFLVPCLLSQHLKS, LEYLDLSENLMSEETLKNSACKDAWPF, LQTLVLRQNRLKSLEKTGELLLTLEN, LNNLDISKNNFLSMPETCQWPGK, MKQLNLSSTRIHSLTQCLPQ, TLEILDVSNNNLDSFSLILPQ, LKELYISRNKLKTLPDASFLPV, and LSVMRISRNIINTFSKEQLDSFQQ. Residue N114 is glycosylated (N-linked (GlcNAc...) asparagine). N-linked (GlcNAc...) asparagine glycosylation is present at N199. C353 and C382 are disulfide-bonded. C432 and C454 are disulfide-bonded. A glycan (N-linked (GlcNAc...) asparagine) is linked at N442. The 55-residue stretch at 525-579 folds into the LRRCT domain; sequence LKTLEAGGNNFICSCDFLSFTQGQQALGRVLVDWPDDYRCDSPSHVRGQRVQDAR. The helical transmembrane segment at 588–608 threads the bilayer; it reads AAVVSAACCALFLLLLLTGVL. The Cytoplasmic portion of the chain corresponds to 609–784; it reads CHRFHGLWYM…WLNLRAAIRS (176 aa). Positions 639–782 constitute a TIR domain; it reads ICYDAFVSYS…GFWLNLRAAI (144 aa). K754 is covalently cross-linked (Glycyl lysine isopeptide (Lys-Gly) (interchain with G-Cter in ubiquitin)). The ATG16L1-binding motif signature appears at 761 to 778; sequence YLEWPVDETQQEGFWLNL.

The protein belongs to the Toll-like receptor family. Interacts with LY96, TLR1 and TLR6 (via extracellular domain). TLR2 seems to exist in heterodimers with either TLR1 or TLR6 before stimulation by the ligand. The heterodimers form bigger oligomers in response to their corresponding ligands as well as further heterotypic associations with other receptors such as CD14 and/or CD36. Binds MYD88 (via TIR domain). Interacts with TICAM1. Interacts with CNPY3. Interacts with ATG16L1. Interacts with PPP1R11. Interacts with TICAM2. Interacts with TIRAP. In terms of processing, ubiquitinated at Lys-754 by PPP1R11, leading to its degradation. Deubiquitinated by USP2. Glycosylation of Asn-442 is critical for secretion of the N-terminal ectodomain of TLR2.

The protein resides in the membrane. It localises to the cytoplasmic vesicle. It is found in the phagosome membrane. The protein localises to the membrane raft. Functionally, cooperates with LY96 to mediate the innate immune response to bacterial lipoproteins and other microbial cell wall components. Cooperates with TLR1 or TLR6 to mediate the innate immune response to bacterial lipoproteins or lipopeptides. Acts via MYD88 and TRAF6, leading to NF-kappa-B activation, cytokine secretion and the inflammatory response. May also promote apoptosis in response to lipoproteins. Forms activation clusters composed of several receptors depending on the ligand, these clusters trigger signaling from the cell surface and subsequently are targeted to the Golgi in a lipid-raft dependent pathway. Forms the cluster TLR2:TLR6:CD14:CD36 in response to diacylated lipopeptides and TLR2:TLR1:CD14 in response to triacylated lipopeptides. The chain is Toll-like receptor 2 (TLR2) from Bos taurus (Bovine).